The primary structure comprises 157 residues: Cytochrome c-type biogenesis protein CcmE (157 aa).

Over 1–8 the chain is Cytoplasmic; that stretch reads MHPVRKQR. The chain crosses the membrane as a helical; Signal-anchor for type II membrane protein span at residues 9-29; sequence LMTVLFIVIASSVAVGLMVFA. The Periplasmic segment spans residues 30-157; that stretch reads LSKNLNLFYP…KTCEGLDYAS (128 aa). Residues H124 and Y128 each contribute to the heme site.

This sequence belongs to the CcmE/CycJ family.

The protein localises to the cell inner membrane. Functionally, heme chaperone required for the biogenesis of c-type cytochromes. Transiently binds heme delivered by CcmC and transfers the heme to apo-cytochromes in a process facilitated by CcmF and CcmH. The polypeptide is Cytochrome c-type biogenesis protein CcmE (Saccharophagus degradans (strain 2-40 / ATCC 43961 / DSM 17024)).